The primary structure comprises 374 residues: uncharacterized protein (374 aa).

Belongs to the mimivirus R640 family.

The protein localises to the virion. This is an uncharacterized protein from Acanthamoeba polyphaga (Amoeba).